We begin with the raw amino-acid sequence, 173 residues long: Adenine phosphoribosyltransferase (173 aa).

It belongs to the purine/pyrimidine phosphoribosyltransferase family. As to quaternary structure, homodimer.

It is found in the cytoplasm. The catalysed reaction is AMP + diphosphate = 5-phospho-alpha-D-ribose 1-diphosphate + adenine. It participates in purine metabolism; AMP biosynthesis via salvage pathway; AMP from adenine: step 1/1. Its function is as follows. Catalyzes a salvage reaction resulting in the formation of AMP, that is energically less costly than de novo synthesis. This is Adenine phosphoribosyltransferase from Methanococcus vannielii (strain ATCC 35089 / DSM 1224 / JCM 13029 / OCM 148 / SB).